The primary structure comprises 251 residues: RING-H2 finger protein ATL10 (251 aa).

Residues 59–79 form a helical membrane-spanning segment; it reads MMLLSILICGIICCLGLHYII. An RING-type; atypical zinc finger spans residues 135–177; the sequence is CVICLSDFVSGEQLRLLPKCNHGFHVRCIDKWLQQHLTCPKCR.

Belongs to the RING-type zinc finger family. ATL subfamily.

It is found in the membrane. The catalysed reaction is S-ubiquitinyl-[E2 ubiquitin-conjugating enzyme]-L-cysteine + [acceptor protein]-L-lysine = [E2 ubiquitin-conjugating enzyme]-L-cysteine + N(6)-ubiquitinyl-[acceptor protein]-L-lysine.. Its pathway is protein modification; protein ubiquitination. This Arabidopsis thaliana (Mouse-ear cress) protein is RING-H2 finger protein ATL10 (ATL10).